A 329-amino-acid chain; its full sequence is MSEKIHITQNSGNVDHTVEALGHAISGGVAGMAAIALTYPFSTVSTRLQVQQKKQQQGQQSEITTVPYKNSIDAFKRIIKEENWRTLYSGLKSALIGIGASSFVYYYWYTLLKSISLKLKNKQELGTIENLAIAALAGCANVLTTLPIWVVNTRLQINSDKGIVGQFKYIIKNEGFGGLYKGLIPALILVSNPSVQFVSYEKLRALWRRQSGRTKLGGLEVFILGAIAKLIAGIVTYPYLLVKSRLQSQSGNASNPESQQQQYKGTLDAIGKIFKSDGFLGFFKGMPSKMVQTVIGAAFMFLVKDKVVIHAVAILFYLKRLLNKNNKRV.

Solcar repeat units follow at residues 18 to 115, 125 to 206, and 216 to 310; these read VEAL…LKSI, LGTI…LRAL, and LGGL…VVIH. 6 helical membrane-spanning segments follow: residues 21 to 41, 95 to 115, 131 to 151, 175 to 195, 221 to 241, and 298 to 318; these read LGHAISGGVAGMAAIALTYPF, LIGIGASSFVYYYWYTLLKSI, LAIAALAGCANVLTTLPIWVV, GFGGLYKGLIPALILVSNPSV, VFILGAIAKLIAGIVTYPYLL, and AFMFLVKDKVVIHAVAILFYL.

This sequence belongs to the mitochondrial carrier (TC 2.A.29) family.

It is found in the peroxisome membrane. May have transport activity. This is Mitochondrial substrate carrier family protein Q (mcfQ) from Dictyostelium discoideum (Social amoeba).